The primary structure comprises 361 residues: Replication-associated protein (361 aa).

A CRESS-DNA virus Rep endonuclease domain is found at 8-116 (RINAKNYFLT…DGDVLDHGVF (109 aa)). The RCR-1 motif lies at 15–18 (FLTY). Residues glutamate 49, histidine 57, and histidine 59 each coordinate a divalent metal cation. Positions 57–59 (HLH) match the RCR-2 motif. The active-site For DNA cleavage activity is the tyrosine 103. The RCR-3 signature appears at 103 to 106 (YMEK). Residue aspartate 107 participates in a divalent metal cation binding. The interval 143–153 (KASALNILREK) is binding to RBR1. Positions 156 to 176 (KDFVLQFHNLNSNLDRIFTPP) are oligomerization. 221–228 (GDSRTGKT) serves as a coordination point for ATP.

Belongs to the geminiviridae Rep protein family. As to quaternary structure, homooligomer. Interacts with the replication enhancer protein (REn). Interacts with host retinoblastoma-related protein 1 (RBR1), and may thereby induce the transcription of host replicative enzymes even if the cell is not dividing anymore. Interacts with host PCNA. Interacts with host SCE1 protein. Mg(2+) is required as a cofactor. Mn(2+) serves as cofactor.

The protein resides in the host nucleus. Its function is as follows. Essential for the replication of viral ssDNA. The closed circular ssDNA genome is first converted to a superhelical dsDNA. Rep binds a specific region at the genome origin of replication. It introduces an endonucleolytic nick within the conserved sequence 5'-TAATATTAC-3' in the intergenic region of the genome present in all geminiviruses, thereby initiating the rolling circle replication (RCR). Following cleavage, binds covalently to the 5'-phosphate of DNA as a tyrosyl ester. The cleavage gives rise to a free 3'-OH that serves as a primer for the cellular DNA polymerase. The polymerase synthesizes the (+) strand DNA by rolling circle mechanism. After one round of replication, a Rep-catalyzed nucleotidyl transfer reaction releases a circular single-stranded virus genome, thereby terminating the replication. Displays origin-specific DNA cleavage, nucleotidyl transferase, ATPase and helicase activities. This Tomato yellow leaf curl China virus (TYLCCNV) protein is Replication-associated protein.